Reading from the N-terminus, the 292-residue chain is Nitrogenase iron protein 1 (292 aa).

12–19 contacts ATP; that stretch reads GKGGIGKS. Residue Cys101 participates in [4Fe-4S] cluster binding. Arg104 carries the ADP-ribosylarginine; by dinitrogenase reductase ADP-ribosyltransferase modification. Cys135 lines the [4Fe-4S] cluster pocket.

This sequence belongs to the NifH/BchL/ChlL family. Homodimer. The cofactor is [4Fe-4S] cluster. Post-translationally, the reversible ADP-ribosylation of Arg-104 inactivates the nitrogenase reductase and regulates nitrogenase activity.

The enzyme catalyses N2 + 8 reduced [2Fe-2S]-[ferredoxin] + 16 ATP + 16 H2O = H2 + 8 oxidized [2Fe-2S]-[ferredoxin] + 2 NH4(+) + 16 ADP + 16 phosphate + 6 H(+). Its function is as follows. The key enzymatic reactions in nitrogen fixation are catalyzed by the nitrogenase complex, which has 2 components: the iron protein and the molybdenum-iron protein. In Paenibacillus durus (Paenibacillus azotofixans), this protein is Nitrogenase iron protein 1 (nifH1).